A 778-amino-acid chain; its full sequence is Lon protease (778 aa).

The Lon N-terminal domain maps to 4–187 (LPVLPLTDAV…LLVGWVRAHL (184 aa)). 346–353 (GPPGVGKT) is a binding site for ATP. The region spanning 581–762 (TAVPGVATGL…ADVLALALRP (182 aa)) is the Lon proteolytic domain. Catalysis depends on residues Ser-668 and Lys-711.

This sequence belongs to the peptidase S16 family. Homohexamer. Organized in a ring with a central cavity.

The protein localises to the cytoplasm. The catalysed reaction is Hydrolysis of proteins in presence of ATP.. ATP-dependent serine protease that mediates the selective degradation of mutant and abnormal proteins as well as certain short-lived regulatory proteins. Required for cellular homeostasis and for survival from DNA damage and developmental changes induced by stress. Degrades polypeptides processively to yield small peptide fragments that are 5 to 10 amino acids long. Binds to DNA in a double-stranded, site-specific manner. The sequence is that of Lon protease from Salinispora arenicola (strain CNS-205).